Here is a 73-residue protein sequence, read N- to C-terminus: Large ribosomal subunit protein bL31 (73 aa).

Belongs to the bacterial ribosomal protein bL31 family. Type A subfamily. As to quaternary structure, part of the 50S ribosomal subunit.

In terms of biological role, binds the 23S rRNA. This Synechococcus sp. (strain JA-3-3Ab) (Cyanobacteria bacterium Yellowstone A-Prime) protein is Large ribosomal subunit protein bL31.